Reading from the N-terminus, the 453-residue chain is Choline kinase alpha (453 aa).

Residues C22–P81 form a disordered region. Over residues A55–P73 the composition is skewed to pro residues. S71 is subject to Phosphoserine. Residues R113–M119, R142, and Q203–R209 each bind ATP. Position 115–117 (G115–S117) interacts with phosphocholine. Position 243 is an N6-acetyllysine (K243). S275 is modified (phosphoserine). ATP is bound by residues Q304 and D326.

It belongs to the choline/ethanolamine kinase family. In terms of assembly, heterodimer with CHKB. Homodimer. Monomer; acetylation by KAT5 promotes dissociation of the homodimer and monomerization. In terms of processing, phosphorylated at Ser-275 by AMPK in response to glucose deprivation, leading to localization to lipid droplets. Post-translationally, acetylated by KAT5 at Lys-243 following phosphorylation by AMPK, leading to monomerization and conversion into a tyrosine-protein kinase. As to expression, testis, brain, lung, kidney and liver.

The protein resides in the cytoplasm. It is found in the cytosol. Its subcellular location is the lipid droplet. The enzyme catalyses choline + ATP = phosphocholine + ADP + H(+). It catalyses the reaction ethanolamine + ATP = phosphoethanolamine + ADP + H(+). It carries out the reaction L-tyrosyl-[protein] + ATP = O-phospho-L-tyrosyl-[protein] + ADP + H(+). It functions in the pathway phospholipid metabolism; phosphatidylcholine biosynthesis; phosphocholine from choline: step 1/1. Its pathway is phospholipid metabolism; phosphatidylethanolamine biosynthesis; phosphatidylethanolamine from ethanolamine: step 1/3. Its function is as follows. Plays a key role in phospholipid biosynthesis by catalyzing the phosphorylation of free choline to phosphocholine, the first step in phosphatidylcholine biosynthesis. Also phosphorylates ethanolamine, thereby contributing to phosphatidylethanolamine biosynthesis. Has higher activity with choline. Functionally, this isoform plays a key role in lipolysis of lipid droplets following glucose deprivation. In response to glucose deprivation, phosphorylated by AMPK, promoting localization to lipid droplets. Phosphorylation is followed by acetylation by KAT5, leading to dissociation of the homodimer into a monomer. Monomeric CHKA isoform 1 is converted into a tyrosine-protein kinase, which phosphorylates lipid droplet structural proteins PLIN2 and PLIN3, leading to lipolysis of lipid droplets. The polypeptide is Choline kinase alpha (Chka) (Rattus norvegicus (Rat)).